The following is a 141-amino-acid chain: Large ribosomal subunit protein uL11A (141 aa).

The protein belongs to the universal ribosomal protein uL11 family. In terms of assembly, part of the ribosomal stalk of the 50S ribosomal subunit. Interacts with L10 and the large rRNA to form the base of the stalk. L10 forms an elongated spine to which L12 dimers bind in a sequential fashion forming a multimeric L10(L12)X complex. One or more lysine residues are methylated.

Functionally, forms part of the ribosomal stalk which helps the ribosome interact with GTP-bound translation factors. This is Large ribosomal subunit protein uL11A from Halalkalibacterium halodurans (strain ATCC BAA-125 / DSM 18197 / FERM 7344 / JCM 9153 / C-125) (Bacillus halodurans).